Consider the following 557-residue polypeptide: Potassium-transporting ATPase potassium-binding subunit (557 aa).

12 consecutive transmembrane segments (helical) span residues 5–25 (GFLLIVTFLLVLMVLARPLGS), 63–83 (LSAILGLNMLGLAVLFFMLLG), 132–152 (GLTVQNFLSAASGIAVIFALI), 170–190 (LLRITLWVLAPVALLIALFFI), 253–273 (FVQMLAIFVIPTALCFAFGEV), 283–303 (LLWAMSVIFVICVGVVMWAEV), 329–349 (VLVSSLFAVVTTAASCGAVIA), 356–376 (ALGGMVPMWLMQIGEVVFGGV), 379–399 (GLYGMMLFVLLAVFIAGLMIG), 416–436 (LTALAILVTPTLVLMGAALAM), 484–504 (LLAFCMFVGRFGVIIPVMAIA), and 526–546 (LFVGLLIGTVLLVGALTFIPA).

The protein belongs to the KdpA family. In terms of assembly, the system is composed of three essential subunits: KdpA, KdpB and KdpC.

The protein resides in the cell inner membrane. Part of the high-affinity ATP-driven potassium transport (or Kdp) system, which catalyzes the hydrolysis of ATP coupled with the electrogenic transport of potassium into the cytoplasm. This subunit binds the periplasmic potassium ions and delivers the ions to the membrane domain of KdpB through an intramembrane tunnel. The chain is Potassium-transporting ATPase potassium-binding subunit from Escherichia fergusonii (strain ATCC 35469 / DSM 13698 / CCUG 18766 / IAM 14443 / JCM 21226 / LMG 7866 / NBRC 102419 / NCTC 12128 / CDC 0568-73).